Consider the following 287-residue polypeptide: ATP synthase subunit a (287 aa).

6 consecutive transmembrane segments (helical) span residues 37–57 (LDSVAVSVILGVLGLFVMWLA), 96–116 (FIAPLALTVFVWIFLMNAMDL), 144–164 (DLSTTLGLSSAVLILCFVYSI), 187–207 (PVFALILGVVNLLMQIIEYVA), 224–244 (ELVFMLIALMGGAAAMSLSGV), and 266–286 (TLQAFIFMMLTLIYLGQAHEA).

Belongs to the ATPase A chain family. In terms of assembly, F-type ATPases have 2 components, CF(1) - the catalytic core - and CF(0) - the membrane proton channel. CF(1) has five subunits: alpha(3), beta(3), gamma(1), delta(1), epsilon(1). CF(0) has three main subunits: a(1), b(2) and c(9-12). The alpha and beta chains form an alternating ring which encloses part of the gamma chain. CF(1) is attached to CF(0) by a central stalk formed by the gamma and epsilon chains, while a peripheral stalk is formed by the delta and b chains.

The protein localises to the cell inner membrane. Its function is as follows. Key component of the proton channel; it plays a direct role in the translocation of protons across the membrane. The sequence is that of ATP synthase subunit a from Acidovorax ebreus (strain TPSY) (Diaphorobacter sp. (strain TPSY)).